A 625-amino-acid polypeptide reads, in one-letter code: Arginine--tRNA ligase (625 aa).

The 'HIGH' region motif lies at 128–138 (VNPTKPLHMGH).

Belongs to the class-I aminoacyl-tRNA synthetase family.

It localises to the cytoplasm. The catalysed reaction is tRNA(Arg) + L-arginine + ATP = L-arginyl-tRNA(Arg) + AMP + diphosphate. This is Arginine--tRNA ligase (argS) from Pyrococcus abyssi (strain GE5 / Orsay).